Reading from the N-terminus, the 296-residue chain is 4-hydroxy-tetrahydrodipicolinate synthase (296 aa).

Threonine 47 provides a ligand contact to pyruvate. Catalysis depends on tyrosine 135, which acts as the Proton donor/acceptor. Catalysis depends on lysine 164, which acts as the Schiff-base intermediate with substrate. A pyruvate-binding site is contributed by isoleucine 207.

The protein belongs to the DapA family. Homotetramer; dimer of dimers.

The protein localises to the cytoplasm. It catalyses the reaction L-aspartate 4-semialdehyde + pyruvate = (2S,4S)-4-hydroxy-2,3,4,5-tetrahydrodipicolinate + H2O + H(+). The protein operates within amino-acid biosynthesis; L-lysine biosynthesis via DAP pathway; (S)-tetrahydrodipicolinate from L-aspartate: step 3/4. In terms of biological role, catalyzes the condensation of (S)-aspartate-beta-semialdehyde [(S)-ASA] and pyruvate to 4-hydroxy-tetrahydrodipicolinate (HTPA). This Karelsulcia muelleri (strain GWSS) (Sulcia muelleri) protein is 4-hydroxy-tetrahydrodipicolinate synthase.